Consider the following 357-residue polypeptide: Glucose-6-phosphatase catalytic subunit 1 (357 aa).

Residues 1-28 (MEKGMNVLHDFGIQSTHYLQVNYQDSQD) lie on the Lumenal side of the membrane. Residues 29–49 (WFILVSVIADLRNAFYVLFPI) form a helical membrane-spanning segment. At 50–60 (WFHLREAVGIK) the chain is on the cytoplasmic side. A helical transmembrane segment spans residues 61–81 (LLWVAVIGDWLNLVFKWILFG). Topologically, residues 82–117 (QRPYWWVMDTDYYSNASVPLIKQFPVTCETGPGSPS) are lumenal. A substrate-binding site is contributed by R83. The N-linked (GlcNAc...) asparagine glycan is linked to N96. The helical transmembrane segment at 118-138 (GHAMGTAGVYYVMVTSTLSMF) threads the bilayer. The Proton donor role is filled by H119. Residues 139 to 147 (RGKKKPTYR) are Cytoplasmic-facing. Residues 148-168 (FRCLNVILWLGFWAVQLNVCL) traverse the membrane as a helical segment. The Lumenal portion of the chain corresponds to 169–170 (SR). A substrate-binding site is contributed by R170. Residues 171–191 (IYLAAHFPHQVVAGVLSGIAV) traverse the membrane as a helical segment. H176 functions as the Nucleophile in the catalytic mechanism. Residues 192-209 (AETFRHIQSIYNASLKKY) lie on the Cytoplasmic side of the membrane. A helical membrane pass occupies residues 210-230 (FFITFFLLSFAIGFYLLLKGL). The Lumenal segment spans residues 231–254 (GVDLLWTLEKARRWCERPEWVHID). A helical membrane pass occupies residues 255–275 (TTPFASLLKNVGTLFGLGLAL). The Cytoplasmic segment spans residues 276–291 (NSSMYRESCKGTLSKW). Residues 292-312 (FPFRLSCIVVSLILLHLFDSL) form a helical membrane-spanning segment. Residues 313 to 320 (KPPSQIEL) are Lumenal-facing. A helical membrane pass occupies residues 321–341 (IFYVLSFCKSAAVPLASVSLI). Over 342 to 357 (PYCLARVLGQPDKKSL) the chain is Cytoplasmic. The Prevents secretion from ER signature appears at 354 to 357 (KKSL).

The protein belongs to the glucose-6-phosphatase family.

Its subcellular location is the endoplasmic reticulum membrane. The enzyme catalyses D-glucose 6-phosphate + H2O = D-glucose + phosphate. The protein operates within carbohydrate biosynthesis; gluconeogenesis. Functionally, hydrolyzes glucose-6-phosphate to glucose in the endoplasmic reticulum. Forms with the glucose-6-phosphate transporter (SLC37A4/G6PT) the complex responsible for glucose production in the terminal step of glycogenolysis and gluconeogenesis. Hence, it is the key enzyme in homeostatic regulation of blood glucose levels. The protein is Glucose-6-phosphatase catalytic subunit 1 (G6PC1) of Felis catus (Cat).